The chain runs to 143 residues: Meiotically up-regulated gene 128 protein (143 aa).

In terms of biological role, has a role in meiosis. This is Meiotically up-regulated gene 128 protein (mug128) from Schizosaccharomyces pombe (strain 972 / ATCC 24843) (Fission yeast).